Consider the following 246-residue polypeptide: 1-(5-phosphoribosyl)-5-[(5-phosphoribosylamino)methylideneamino] imidazole-4-carboxamide isomerase (246 aa).

The active-site Proton acceptor is the Asp8. Residue Asp131 is the Proton donor of the active site.

Belongs to the HisA/HisF family.

The protein localises to the cytoplasm. It catalyses the reaction 1-(5-phospho-beta-D-ribosyl)-5-[(5-phospho-beta-D-ribosylamino)methylideneamino]imidazole-4-carboxamide = 5-[(5-phospho-1-deoxy-D-ribulos-1-ylimino)methylamino]-1-(5-phospho-beta-D-ribosyl)imidazole-4-carboxamide. It participates in amino-acid biosynthesis; L-histidine biosynthesis; L-histidine from 5-phospho-alpha-D-ribose 1-diphosphate: step 4/9. The polypeptide is 1-(5-phosphoribosyl)-5-[(5-phosphoribosylamino)methylideneamino] imidazole-4-carboxamide isomerase (Bordetella petrii (strain ATCC BAA-461 / DSM 12804 / CCUG 43448)).